A 145-amino-acid polypeptide reads, in one-letter code: Large ribosomal subunit protein uL16 (145 aa).

This sequence belongs to the universal ribosomal protein uL16 family. As to quaternary structure, part of the 50S ribosomal subunit.

Binds 23S rRNA and is also seen to make contacts with the A and possibly P site tRNAs. This is Large ribosomal subunit protein uL16 from Lactobacillus gasseri (strain ATCC 33323 / DSM 20243 / BCRC 14619 / CIP 102991 / JCM 1131 / KCTC 3163 / NCIMB 11718 / NCTC 13722 / AM63).